The chain runs to 337 residues: Ribosomal RNA small subunit methyltransferase C (337 aa).

It belongs to the methyltransferase superfamily. RsmC family. Monomer.

It localises to the cytoplasm. It catalyses the reaction guanosine(1207) in 16S rRNA + S-adenosyl-L-methionine = N(2)-methylguanosine(1207) in 16S rRNA + S-adenosyl-L-homocysteine + H(+). Its function is as follows. Specifically methylates the guanine in position 1207 of 16S rRNA in the 30S particle. This Acinetobacter baumannii (strain ATCC 17978 / DSM 105126 / CIP 53.77 / LMG 1025 / NCDC KC755 / 5377) protein is Ribosomal RNA small subunit methyltransferase C.